A 25-amino-acid chain; its full sequence is Caerin-1.17 (25 aa).

Leu25 carries the post-translational modification Leucine amide.

The protein belongs to the frog skin active peptide (FSAP) family. Caerin subfamily. Expressed by the skin dorsal glands.

It is found in the secreted. Functionally, caerin-1.17 shows significant activity against Gram-positive organisms, but is less effective against Gram-negative organisms. The sequence is that of Caerin-1.17 from Ranoidea gracilenta (Dainty green tree frog).